A 211-amino-acid polypeptide reads, in one-letter code: ATP-dependent Clp protease proteolytic subunit (211 aa).

The active-site Nucleophile is the Ser-114. The active site involves His-139.

Belongs to the peptidase S14 family. As to quaternary structure, fourteen ClpP subunits assemble into 2 heptameric rings which stack back to back to give a disk-like structure with a central cavity, resembling the structure of eukaryotic proteasomes.

The protein resides in the cytoplasm. The enzyme catalyses Hydrolysis of proteins to small peptides in the presence of ATP and magnesium. alpha-casein is the usual test substrate. In the absence of ATP, only oligopeptides shorter than five residues are hydrolyzed (such as succinyl-Leu-Tyr-|-NHMec, and Leu-Tyr-Leu-|-Tyr-Trp, in which cleavage of the -Tyr-|-Leu- and -Tyr-|-Trp bonds also occurs).. Cleaves peptides in various proteins in a process that requires ATP hydrolysis. Has a chymotrypsin-like activity. Plays a major role in the degradation of misfolded proteins. The polypeptide is ATP-dependent Clp protease proteolytic subunit (Pseudomonas fluorescens (strain ATCC BAA-477 / NRRL B-23932 / Pf-5)).